The sequence spans 624 residues: Alpha-mannosidase I MNS4 (624 aa).

Residues 1-7 (MDSNFKW) are Cytoplasmic-facing. A helical; Signal-anchor for type II membrane protein transmembrane segment spans residues 8–28 (LLFAILISLTFSGFVLHHGVL). The Lumenal segment spans residues 29-624 (AESVKPDEAK…ETDDQRSYSS (596 aa)). N-linked (GlcNAc...) asparagine glycosylation is present at asparagine 115. Glutamate 122 (proton donor) is an active-site residue. Aspartate 262 is a catalytic residue. Glutamate 355 (proton donor) is an active-site residue. Glutamate 376 is a catalytic residue. Threonine 466 serves as a coordination point for Ca(2+). An N-linked (GlcNAc...) asparagine glycan is attached at asparagine 494. The tract at residues 574–624 (QTVEKRPQEEEGFTSQSEPIMTISGGSSNDQTGQELTLLESETDDQRSYSS) is disordered. A compositionally biased stretch (polar residues) spans 586–608 (FTSQSEPIMTISGGSSNDQTGQE).

This sequence belongs to the glycosyl hydrolase 47 family. Requires Ca(2+) as cofactor.

The protein localises to the endoplasmic reticulum membrane. Its pathway is protein modification; protein glycosylation. Its function is as follows. Can convert Man(9)GlcNAc(2) and Man(8)GlcNAc(2) into N-glycans with a terminal alpha-1,6-linked Man residue in the C-branch. Functions in the formation of unique N-glycan structures that are specifically recognized by components of the endoplasmic reticulum-associated degradation (ERAD) machinery, which leads to the degradation of misfolded glycoproteins. Most likely generates N-glycan signal on misfolded glycoproteins that is subsequently recognized by OS9. Required for ERAD of the heavily glycosylated and misfolded BRI1 variants BRI1-5 and BRI1-9. Does not seem to play role in N-glycan processing of correctly folded proteins destined for secretion. The polypeptide is Alpha-mannosidase I MNS4 (MNS4) (Arabidopsis thaliana (Mouse-ear cress)).